A 58-amino-acid chain; its full sequence is Galectin-1 (58 aa).

Residues 2-58 (GITXTSLHVAPGARLAVKGDIPAGAKSWVINLGKGENDIMLHFNARFDAHGDIRTIV) form the Galectin domain. A beta-D-galactoside is bound by residues 43–47 (HFNAR) and His51.

In terms of assembly, monomer. Detected in most tissues, most abundantly in skin.

The protein localises to the secreted. It localises to the extracellular space. The protein resides in the extracellular matrix. In terms of biological role, may regulate cell apoptosis and cell differentiation. Binds beta-galactoside and a wide array of complex carbohydrates. The chain is Galectin-1 from Podarcis hispanicus (Iberian wall lizard).